Reading from the N-terminus, the 2321-residue chain is Major viral transcription factor ICP4 homolog (2321 aa).

7 disordered regions span residues 19–183 (GIFP…SPPL), 296–329 (ILHT…PAPI), 350–438 (EFIQ…PSLG), 954–1180 (MDDD…SGLA), 1360–1392 (DNSS…APPH), 1597–1841 (LLND…PSCY), and 2277–2321 (QHEE…TFTD). The segment covering 114 to 147 (SSNRPGGRNSSNGADESGESSSDRSPSYSPCDSY) has biased composition (low complexity). 2 stretches are compositionally biased toward pro residues: residues 302–329 (PTPP…PAPI) and 355–367 (QSPP…PSPP). Positions 368–389 (AHSSSSCSPSHLAPSPLSSSPL) are enriched in low complexity. Residues 390–410 (SSPPQLSPAPVSPPSSPPPLS) show a composition bias toward pro residues. Polar residues-rich tracts occupy residues 424-433 (SISSQPQSCP) and 1002-1011 (PRLTTPSSGR). Residues 1031–1093 (PETSPSNEHI…PSSPSSSRSP (63 aa)) are compositionally biased toward low complexity. Basic residues predominate over residues 1151-1161 (GGGRPRGRPPK). 2 stretches are compositionally biased toward polar residues: residues 1169-1180 (NDIQVTSSSGLA) and 1371-1389 (SKPS…QTTA). Low complexity predominate over residues 1630–1644 (STSSSQSASDKSPIK). 2 stretches are compositionally biased toward polar residues: residues 1720–1743 (KAQT…QSSS) and 1801–1816 (VGQT…HDIL). The span at 1817–1839 (SSSLPNRSCSSSPSPSKRPYHPS) shows a compositional bias: low complexity.

The protein belongs to the herpesviridae ICP4 family. A long stretch of serine residues may be a major site of phosphorylation.

It is found in the host nucleus. This IE protein is a multifunctional protein capable of migrating to the nucleus, binding to DNA, trans-activating other viral genes, and autoregulating its own synthesis. It is required for the switch from immediate-early to early mode of gene expression. This chain is Major viral transcription factor ICP4 homolog (MDV084), found in Gallus gallus (Chicken).